Reading from the N-terminus, the 490-residue chain is Betaine aldehyde dehydrogenase (490 aa).

NAD(+) is bound by residues K174, E177, and 227 to 232 (GGIETG). Active-site residues include E249 and C283. Residue E384 participates in NAD(+) binding.

This sequence belongs to the aldehyde dehydrogenase family. In terms of assembly, homodimer.

The catalysed reaction is betaine aldehyde + NAD(+) + H2O = glycine betaine + NADH + 2 H(+). It functions in the pathway amine and polyamine biosynthesis; betaine biosynthesis via choline pathway; betaine from betaine aldehyde: step 1/1. Its activity is regulated as follows. Activity is stimulated by low concentrations of salts and by moderate concentrations of glycine betaine. Highly tolerant to high ionic conditions. In vitro, activity is highly stimulated in the presence of proline. Functionally, involved in the biosynthesis of the osmoprotectant glycine betaine from choline. Catalyzes the oxidation of betaine aldehyde to betaine. Shows specificity for betaine aldehyde as substrate. Can use both NAD(+) and NADP(+), but NAD(+) is strongly preferred. This Bacillus subtilis (strain 168) protein is Betaine aldehyde dehydrogenase.